We begin with the raw amino-acid sequence, 160 residues long: SPbeta prophage-derived uncharacterized protein YokE (160 aa).

The sequence is that of SPbeta prophage-derived uncharacterized protein YokE (yokE) from Bacillus subtilis (strain 168).